Here is a 136-residue protein sequence, read N- to C-terminus: Peptide methionine sulfoxide reductase MsrB (136 aa).

Residues 9–136 (DAEWKALLAE…NSASLDFKPK (128 aa)) enclose the MsrB domain. Zn(2+)-binding residues include Cys53, Cys56, Cys102, and Cys105. Cys125 (nucleophile) is an active-site residue.

It belongs to the MsrB Met sulfoxide reductase family. Zn(2+) serves as cofactor.

It carries out the reaction L-methionyl-[protein] + [thioredoxin]-disulfide + H2O = L-methionyl-(R)-S-oxide-[protein] + [thioredoxin]-dithiol. The sequence is that of Peptide methionine sulfoxide reductase MsrB from Polaromonas sp. (strain JS666 / ATCC BAA-500).